Reading from the N-terminus, the 826-residue chain is Golgin subfamily A member 6-like protein 25 (826 aa).

Disordered stretches follow at residues 1–100, 297–327, 345–425, 502–534, 547–646, and 658–826; these read MWPQ…HQEA, QEQEEKIREQEEKMRRQEEMMWEKEEKMRRQ, MHEQ…EMWR, QEEMWREEEKMHEQEKIWEEEKRQEQEDKMWRQ, RQEE…EQEE, and QEEM…MQEH. A compositionally biased stretch (basic and acidic residues) spans 31–52; that stretch reads MSKETRQSKLAEAKEQLTDHHP. Composition is skewed to polar residues over residues 53-63 and 71-83; these read QTNPSVGTAAS and NNGTNPETTTSGG. Residues 86–100 show a composition bias toward basic and acidic residues; sequence SPEDEQKASHQHQEA. Residues 157–822 are a coiled coil; sequence LEQALSAVAT…EVRLRQQEEK (666 aa). Basic and acidic residues-rich tracts occupy residues 658-678 and 686-826; these read QEEMMQEQEEKMGEQEEKMWE and QEEK…MQEH.

Belongs to the GOLGA6 family.

In Homo sapiens (Human), this protein is Golgin subfamily A member 6-like protein 25.